A 147-amino-acid chain; its full sequence is 3-dehydroquinate dehydratase (147 aa).

The Proton acceptor role is filled by Y24. Residues N75, H81, and D88 each contribute to the substrate site. The active-site Proton donor is the H101. Residues 102-103 and R112 contribute to the substrate site; that span reads LS.

The protein belongs to the type-II 3-dehydroquinase family. Homododecamer.

The catalysed reaction is 3-dehydroquinate = 3-dehydroshikimate + H2O. It participates in metabolic intermediate biosynthesis; chorismate biosynthesis; chorismate from D-erythrose 4-phosphate and phosphoenolpyruvate: step 3/7. In terms of biological role, catalyzes a trans-dehydration via an enolate intermediate. The protein is 3-dehydroquinate dehydratase of Caulobacter sp. (strain K31).